We begin with the raw amino-acid sequence, 111 residues long: UPF0060 membrane protein Ajs_1473 (111 aa).

Transmembrane regions (helical) follow at residues 8 to 28, 33 to 53, 65 to 85, and 88 to 108; these read ILFA…WLVV, SAWL…LLTL, YGGM…GVAL, and WDFV…LQPA.

It belongs to the UPF0060 family.

The protein resides in the cell inner membrane. This is UPF0060 membrane protein Ajs_1473 from Acidovorax sp. (strain JS42).